The sequence spans 456 residues: Phosphomethylpyrimidine synthase (456 aa).

Residues Asn80, Met109, Tyr139, His175, 195–197 (SRG), 236–239 (DSLR), and Glu275 contribute to the substrate site. His279 provides a ligand contact to Zn(2+). Residue Tyr302 coordinates substrate. Position 343 (His343) interacts with Zn(2+). 3 residues coordinate [4Fe-4S] cluster: Cys423, Cys426, and Cys431.

Belongs to the ThiC family. The cofactor is [4Fe-4S] cluster.

It catalyses the reaction 5-amino-1-(5-phospho-beta-D-ribosyl)imidazole + S-adenosyl-L-methionine = 4-amino-2-methyl-5-(phosphooxymethyl)pyrimidine + CO + 5'-deoxyadenosine + formate + L-methionine + 3 H(+). Its pathway is cofactor biosynthesis; thiamine diphosphate biosynthesis. Catalyzes the synthesis of the hydroxymethylpyrimidine phosphate (HMP-P) moiety of thiamine from aminoimidazole ribotide (AIR) in a radical S-adenosyl-L-methionine (SAM)-dependent reaction. In Prochlorococcus marinus (strain AS9601), this protein is Phosphomethylpyrimidine synthase.